We begin with the raw amino-acid sequence, 426 residues long: D-tagatose-1,6-bisphosphate aldolase subunit KbaZ (426 aa).

Belongs to the GatZ/KbaZ family. KbaZ subfamily. Forms a complex with KbaY.

It participates in carbohydrate metabolism; D-tagatose 6-phosphate degradation; D-glyceraldehyde 3-phosphate and glycerone phosphate from D-tagatose 6-phosphate: step 2/2. Functionally, component of the tagatose-1,6-bisphosphate aldolase KbaYZ that is required for full activity and stability of the Y subunit. Could have a chaperone-like function for the proper and stable folding of KbaY. When expressed alone, KbaZ does not show any aldolase activity. In Escherichia coli (strain ATCC 8739 / DSM 1576 / NBRC 3972 / NCIMB 8545 / WDCM 00012 / Crooks), this protein is D-tagatose-1,6-bisphosphate aldolase subunit KbaZ.